Reading from the N-terminus, the 371-residue chain is Histidinol-phosphate aminotransferase (371 aa).

Lysine 227 bears the N6-(pyridoxal phosphate)lysine mark.

Belongs to the class-II pyridoxal-phosphate-dependent aminotransferase family. Histidinol-phosphate aminotransferase subfamily. Homodimer. The cofactor is pyridoxal 5'-phosphate.

It catalyses the reaction L-histidinol phosphate + 2-oxoglutarate = 3-(imidazol-4-yl)-2-oxopropyl phosphate + L-glutamate. It participates in amino-acid biosynthesis; L-histidine biosynthesis; L-histidine from 5-phospho-alpha-D-ribose 1-diphosphate: step 7/9. This Sphingopyxis alaskensis (strain DSM 13593 / LMG 18877 / RB2256) (Sphingomonas alaskensis) protein is Histidinol-phosphate aminotransferase.